A 90-amino-acid chain; its full sequence is MKKVLVKAVHGYQRWISPVFPPACRYYPTCSNYMIQAIEKHGPAKGLAMGTARILRCHPFCQPGYDLVPKHFSLRRNWAEPEKKEEEDSK.

Belongs to the UPF0161 family.

The protein localises to the cell membrane. Its function is as follows. Could be involved in insertion of integral membrane proteins into the membrane. This is Putative membrane protein insertion efficiency factor from Lactococcus lactis subsp. cremoris (strain SK11).